We begin with the raw amino-acid sequence, 394 residues long: NAD(P)H-quinone oxidoreductase subunit H (394 aa).

The protein belongs to the complex I 49 kDa subunit family. NDH-1 can be composed of about 15 different subunits; different subcomplexes with different compositions have been identified which probably have different functions.

It localises to the cellular thylakoid membrane. It catalyses the reaction a plastoquinone + NADH + (n+1) H(+)(in) = a plastoquinol + NAD(+) + n H(+)(out). The enzyme catalyses a plastoquinone + NADPH + (n+1) H(+)(in) = a plastoquinol + NADP(+) + n H(+)(out). Its function is as follows. NDH-1 shuttles electrons from an unknown electron donor, via FMN and iron-sulfur (Fe-S) centers, to quinones in the respiratory and/or the photosynthetic chain. The immediate electron acceptor for the enzyme in this species is believed to be plastoquinone. Couples the redox reaction to proton translocation, and thus conserves the redox energy in a proton gradient. Cyanobacterial NDH-1 also plays a role in inorganic carbon-concentration. The chain is NAD(P)H-quinone oxidoreductase subunit H from Picosynechococcus sp. (strain ATCC 27264 / PCC 7002 / PR-6) (Agmenellum quadruplicatum).